The sequence spans 651 residues: Methionine--tRNA ligase (651 aa).

Positions 10-20 (AYTNGPLHLGH) match the 'HIGH' region motif. The Zn(2+) site is built by Cys-142, Cys-145, Cys-154, and Cys-157. Residues 320-324 (KMSTS) carry the 'KMSKS' region motif. Residue Thr-323 coordinates ATP. One can recognise a tRNA-binding domain in the interval 550–651 (YLEKIDLRVG…KDIKAGSKVR (102 aa)).

This sequence belongs to the class-I aminoacyl-tRNA synthetase family. MetG type 1 subfamily. In terms of assembly, homodimer. It depends on Zn(2+) as a cofactor.

The protein localises to the cytoplasm. It catalyses the reaction tRNA(Met) + L-methionine + ATP = L-methionyl-tRNA(Met) + AMP + diphosphate. In terms of biological role, is required not only for elongation of protein synthesis but also for the initiation of all mRNA translation through initiator tRNA(fMet) aminoacylation. The sequence is that of Methionine--tRNA ligase from Methanocaldococcus jannaschii (strain ATCC 43067 / DSM 2661 / JAL-1 / JCM 10045 / NBRC 100440) (Methanococcus jannaschii).